A 514-amino-acid polypeptide reads, in one-letter code: JmjC domain-containing histone demethylation protein 1 (514 aa).

The segment at 4–62 (IDTCPICVESPLEDSTTFNNIAWLQCDICNQWFHASCLKIPKIEVNNLHSYHCEGCSKS) adopts a PHD-type zinc-finger fold. Residues 220 to 384 (SDVDSFGKSF…MHLRIYEIEK (165 aa)) enclose the JmjC domain. A substrate-binding site is contributed by T267. Fe cation-binding residues include H270 and D272. K287 is a substrate binding site. H352 serves as a coordination point for Fe cation. Over residues 432-454 (KSEAHSRGEVHTKTETHAVKDEP) the composition is skewed to basic and acidic residues. The tract at residues 432 to 456 (KSEAHSRGEVHTKTETHAVKDEPQP) is disordered.

It belongs to the JHDM1 histone demethylase family. It depends on Fe(2+) as a cofactor.

The protein resides in the nucleus. The enzyme catalyses N(6),N(6)-dimethyl-L-lysyl(36)-[histone H3] + 2 2-oxoglutarate + 2 O2 = L-lysyl(36)-[histone H3] + 2 formaldehyde + 2 succinate + 2 CO2. Its function is as follows. Histone demethylase that specifically demethylates 'Lys-36' of histone H3, thereby playing a central role in histone code. The sequence is that of JmjC domain-containing histone demethylation protein 1 (JHD1) from Debaryomyces hansenii (strain ATCC 36239 / CBS 767 / BCRC 21394 / JCM 1990 / NBRC 0083 / IGC 2968) (Yeast).